A 1303-amino-acid polypeptide reads, in one-letter code: DNA-directed RNA polymerase subunit beta'' (1303 aa).

Residues cysteine 225, cysteine 299, cysteine 306, and cysteine 309 each contribute to the Zn(2+) site.

It belongs to the RNA polymerase beta' chain family. RpoC2 subfamily. In terms of assembly, in plastids the minimal PEP RNA polymerase catalytic core is composed of four subunits: alpha, beta, beta', and beta''. When a (nuclear-encoded) sigma factor is associated with the core the holoenzyme is formed, which can initiate transcription. The cofactor is Zn(2+).

Its subcellular location is the plastid. It localises to the chloroplast. It carries out the reaction RNA(n) + a ribonucleoside 5'-triphosphate = RNA(n+1) + diphosphate. Functionally, DNA-dependent RNA polymerase catalyzes the transcription of DNA into RNA using the four ribonucleoside triphosphates as substrates. In Rhodomonas salina (Cryptomonas salina), this protein is DNA-directed RNA polymerase subunit beta''.